Consider the following 276-residue polypeptide: Putative serine/threonine-protein kinase R436 (276 aa).

One can recognise a Protein kinase domain in the interval 6 to 266 (YSLDKLIQNR…IKQKLNHFKT (261 aa)). ATP contacts are provided by residues 12–20 (IQNRKSKRI) and Lys35. Asp132 acts as the Proton acceptor in catalysis.

This sequence belongs to the protein kinase superfamily. Ser/Thr protein kinase family.

It carries out the reaction L-seryl-[protein] + ATP = O-phospho-L-seryl-[protein] + ADP + H(+). It catalyses the reaction L-threonyl-[protein] + ATP = O-phospho-L-threonyl-[protein] + ADP + H(+). This chain is Putative serine/threonine-protein kinase R436, found in Acanthamoeba polyphaga (Amoeba).